A 170-amino-acid chain; its full sequence is Acireductone dioxygenase (170 aa).

Residues His-99, His-101, Glu-105, and His-144 each coordinate Fe(2+). Ni(2+) contacts are provided by His-99, His-101, Glu-105, and His-144.

This sequence belongs to the acireductone dioxygenase (ARD) family. As to quaternary structure, monomer. Fe(2+) is required as a cofactor. It depends on Ni(2+) as a cofactor.

It carries out the reaction 1,2-dihydroxy-5-(methylsulfanyl)pent-1-en-3-one + O2 = 3-(methylsulfanyl)propanoate + CO + formate + 2 H(+). It catalyses the reaction 1,2-dihydroxy-5-(methylsulfanyl)pent-1-en-3-one + O2 = 4-methylsulfanyl-2-oxobutanoate + formate + 2 H(+). It functions in the pathway amino-acid biosynthesis; L-methionine biosynthesis via salvage pathway; L-methionine from S-methyl-5-thio-alpha-D-ribose 1-phosphate: step 5/6. In terms of biological role, catalyzes 2 different reactions between oxygen and the acireductone 1,2-dihydroxy-3-keto-5-methylthiopentene (DHK-MTPene) depending upon the metal bound in the active site. Fe-containing acireductone dioxygenase (Fe-ARD) produces formate and 2-keto-4-methylthiobutyrate (KMTB), the alpha-ketoacid precursor of methionine in the methionine recycle pathway. Ni-containing acireductone dioxygenase (Ni-ARD) produces methylthiopropionate, carbon monoxide and formate, and does not lie on the methionine recycle pathway. In Bacillus mycoides (strain KBAB4) (Bacillus weihenstephanensis), this protein is Acireductone dioxygenase.